Here is a 332-residue protein sequence, read N- to C-terminus: Cysteine and histidine-rich domain-containing protein 1 (332 aa).

Position 2 is an N-acetylalanine (alanine 2). Residues 2-77 (ALLCYNRACG…KPPEPVKPEV (76 aa)) form an interaction with PPP5C region. Zn(2+) is bound by residues cysteine 5, cysteine 10, cysteine 24, histidine 27, cysteine 42, and cysteine 43. 2 CHORD domains span residues 5–64 (CYNR…KGRH) and 157–216 (CKNG…KGRH). Threonine 47 carries the phosphothreonine modification. Position 51 is a phosphoserine (serine 51). Positions 59, 64, 157, 162, 176, 179, 194, 195, 211, and 216 each coordinate Zn(2+). Residues 62-82 (GRHNSEKPPEPVKPEVKTTEK) form a disordered region. Residues 64–82 (HNSEKPPEPVKPEVKTTEK) are compositionally biased toward basic and acidic residues. The tract at residues 65–316 (NSEKPPEPVK…AEPMQWASLE (252 aa)) is interaction with HSP90AA1 and HSP90AB1. The region spanning 227-316 (VVPCRHDWHQ…AEPMQWASLE (90 aa)) is the CS domain.

In terms of assembly, interacts with HSP90AA1, HSP90AB1, PPP5C, ROCK1 and ROCK2.

In terms of biological role, regulates centrosome duplication, probably by inhibiting the kinase activity of ROCK2. Proposed to act as co-chaperone for HSP90. May play a role in the regulation of NOD1 via a HSP90 chaperone complex. In vitro, has intrinsic chaperone activity. This function may be achieved by inhibiting association of ROCK2 with NPM1. Plays a role in ensuring the localization of the tyrosine kinase receptor EGFR to the plasma membrane, and thus ensures the subsequent regulation of EGFR activity and EGF-induced actin cytoskeleton remodeling. Involved in stress response. Prevents tumorigenesis. This Macaca fascicularis (Crab-eating macaque) protein is Cysteine and histidine-rich domain-containing protein 1 (CHORDC1).